The primary structure comprises 165 residues: Small ribosomal subunit protein uS5 (165 aa).

In terms of domain architecture, S5 DRBM spans 10 to 73 (LNEKLIAVNR…EKARRNMVTV (64 aa)).

The protein belongs to the universal ribosomal protein uS5 family. In terms of assembly, part of the 30S ribosomal subunit. Contacts proteins S4 and S8.

With S4 and S12 plays an important role in translational accuracy. Its function is as follows. Located at the back of the 30S subunit body where it stabilizes the conformation of the head with respect to the body. The polypeptide is Small ribosomal subunit protein uS5 (Photobacterium profundum (strain SS9)).